We begin with the raw amino-acid sequence, 57 residues long: Large ribosomal subunit protein bL32 (57 aa).

Belongs to the bacterial ribosomal protein bL32 family.

The polypeptide is Large ribosomal subunit protein bL32 (Staphylococcus aureus (strain MSSA476)).